We begin with the raw amino-acid sequence, 87 residues long: Small ribosomal subunit protein uS17 (87 aa).

Belongs to the universal ribosomal protein uS17 family. As to quaternary structure, part of the 30S ribosomal subunit.

One of the primary rRNA binding proteins, it binds specifically to the 5'-end of 16S ribosomal RNA. This chain is Small ribosomal subunit protein uS17, found in Staphylococcus aureus (strain Mu3 / ATCC 700698).